Reading from the N-terminus, the 638-residue chain is 1-deoxy-D-xylulose-5-phosphate synthase (638 aa).

Thiamine diphosphate is bound by residues His76 and 117–119 (AHS). Residue Asp148 participates in Mg(2+) binding. Thiamine diphosphate-binding positions include 149 to 150 (GS), Asn177, Tyr287, and Glu369. Position 177 (Asn177) interacts with Mg(2+).

This sequence belongs to the transketolase family. DXPS subfamily. As to quaternary structure, homodimer. It depends on Mg(2+) as a cofactor. Thiamine diphosphate is required as a cofactor.

The catalysed reaction is D-glyceraldehyde 3-phosphate + pyruvate + H(+) = 1-deoxy-D-xylulose 5-phosphate + CO2. It functions in the pathway metabolic intermediate biosynthesis; 1-deoxy-D-xylulose 5-phosphate biosynthesis; 1-deoxy-D-xylulose 5-phosphate from D-glyceraldehyde 3-phosphate and pyruvate: step 1/1. In terms of biological role, catalyzes the acyloin condensation reaction between C atoms 2 and 3 of pyruvate and glyceraldehyde 3-phosphate to yield 1-deoxy-D-xylulose-5-phosphate (DXP). In Rhodopseudomonas palustris (strain HaA2), this protein is 1-deoxy-D-xylulose-5-phosphate synthase.